We begin with the raw amino-acid sequence, 410 residues long: Regulator of microtubule dynamics protein 2 (410 aa).

Residues 9 to 28 form a helical membrane-spanning segment; that stretch reads LILGIMAGTAGISLLAFWYH. A Phosphoserine modification is found at Ser51. Positions 69-110 form a coiled coil; the sequence is QRRQLQILEKLNELLTNMEELKEEIRFLKETIPKLEECIQDE. A disordered region spans residues 120–151; it reads ISPQHRARKKKGTTVQRSATSNSSEEAESEGG. The residue at position 121 (Ser121) is a Phosphoserine. Basic residues predominate over residues 121 to 131; it reads SPQHRARKKKG. Thr139 carries the phosphothreonine modification. Residue Tyr152 is modified to Phosphotyrosine. Phosphothreonine occurs at positions 154 and 157.

It belongs to the RMDN family. As to quaternary structure, interacts with microtubules.

The protein localises to the membrane. The protein resides in the cytoplasm. Its subcellular location is the cytoskeleton. It localises to the spindle. It is found in the spindle pole. This Mus musculus (Mouse) protein is Regulator of microtubule dynamics protein 2 (Rmdn2).